The following is a 483-amino-acid chain: AP-3 complex subunit mu (483 aa).

The region spanning 211–482 (NNELYVDLLE…KTQTGNFQVR (272 aa)) is the MHD domain.

Belongs to the adaptor complexes medium subunit family. As to quaternary structure, adaptor protein complex 3 (AP-3) is a heterotetramer composed of 2 large adaptins (APL5 and APL6), a medium adaptin (APM3) and a small adaptin (APS3).

It localises to the golgi apparatus. The protein localises to the cytoplasmic vesicle membrane. Its function is as follows. Part of the AP-3 complex, an adaptor-related complex which is not clathrin-associated. The complex is associated with the Golgi region as well as more peripheral structures. It facilitates the budding of vesicles from the Golgi membrane and may be directly involved in trafficking to the vacuole. Required for the transport via the ALP pathway, which directs the transport of the cargo proteins PHO8 and VAM3 to the vacuole. This chain is AP-3 complex subunit mu (APM3), found in Saccharomyces cerevisiae (strain ATCC 204508 / S288c) (Baker's yeast).